A 255-amino-acid polypeptide reads, in one-letter code: Imidazole glycerol phosphate synthase subunit HisF (255 aa).

Active-site residues include aspartate 11 and aspartate 130.

The protein belongs to the HisA/HisF family. Heterodimer of HisH and HisF.

It localises to the cytoplasm. The catalysed reaction is 5-[(5-phospho-1-deoxy-D-ribulos-1-ylimino)methylamino]-1-(5-phospho-beta-D-ribosyl)imidazole-4-carboxamide + L-glutamine = D-erythro-1-(imidazol-4-yl)glycerol 3-phosphate + 5-amino-1-(5-phospho-beta-D-ribosyl)imidazole-4-carboxamide + L-glutamate + H(+). Its pathway is amino-acid biosynthesis; L-histidine biosynthesis; L-histidine from 5-phospho-alpha-D-ribose 1-diphosphate: step 5/9. In terms of biological role, IGPS catalyzes the conversion of PRFAR and glutamine to IGP, AICAR and glutamate. The HisF subunit catalyzes the cyclization activity that produces IGP and AICAR from PRFAR using the ammonia provided by the HisH subunit. This is Imidazole glycerol phosphate synthase subunit HisF from Maricaulis maris (strain MCS10) (Caulobacter maris).